We begin with the raw amino-acid sequence, 374 residues long: Glutamate 5-kinase (374 aa).

ATP is bound at residue Lys13. Substrate is bound by residues Ser54, Asp141, and Asn153. 173–174 lines the ATP pocket; sequence SD. Residues 278–355 enclose the PUA domain; sequence KGTVHLDSGA…NEIESVLGYP (78 aa).

The protein belongs to the glutamate 5-kinase family.

The protein resides in the cytoplasm. It carries out the reaction L-glutamate + ATP = L-glutamyl 5-phosphate + ADP. It functions in the pathway amino-acid biosynthesis; L-proline biosynthesis; L-glutamate 5-semialdehyde from L-glutamate: step 1/2. Catalyzes the transfer of a phosphate group to glutamate to form L-glutamate 5-phosphate. This Roseobacter denitrificans (strain ATCC 33942 / OCh 114) (Erythrobacter sp. (strain OCh 114)) protein is Glutamate 5-kinase.